Reading from the N-terminus, the 395-residue chain is Leucine aminopeptidase 1 (395 aa).

Positions 1 to 19 (MKHLSLLALAAVAPTTALA) are cleaved as a signal peptide. Positions 20–95 (GVIDHQQVTF…SVKSFEQTKV (76 aa)) are excised as a propeptide. N-linked (GlcNAc...) asparagine glycosylation is present at Asn187. Zn(2+) contacts are provided by His195, Asp214, Glu253, and Asp280. A disulfide bond links Cys329 and Cys333. Zn(2+) is bound at residue His362.

This sequence belongs to the peptidase M28 family. M28E subfamily. In terms of assembly, monomer. Zn(2+) is required as a cofactor.

The protein resides in the secreted. In terms of biological role, extracellular aminopeptidase that allows assimilation of proteinaceous substrates. This chain is Leucine aminopeptidase 1 (LAP1), found in Uncinocarpus reesii (strain UAMH 1704).